The chain runs to 392 residues: tRNA-specific 2-thiouridylase MnmA (392 aa).

ATP-binding positions include 18-25 and Met-44; that span reads GMSGGVDS. The segment at 104–106 is interaction with target base in tRNA; that stretch reads NPD. Cys-109 serves as the catalytic Nucleophile. Cysteines 109 and 208 form a disulfide. Gly-133 contributes to the ATP binding site. The tract at residues 158–160 is interaction with tRNA; the sequence is KDQ. The active-site Cysteine persulfide intermediate is the Cys-208. The tract at residues 320-321 is interaction with tRNA; the sequence is RY.

This sequence belongs to the MnmA/TRMU family.

It is found in the cytoplasm. The catalysed reaction is S-sulfanyl-L-cysteinyl-[protein] + uridine(34) in tRNA + AH2 + ATP = 2-thiouridine(34) in tRNA + L-cysteinyl-[protein] + A + AMP + diphosphate + H(+). Catalyzes the 2-thiolation of uridine at the wobble position (U34) of tRNA, leading to the formation of s(2)U34. The chain is tRNA-specific 2-thiouridylase MnmA from Marinobacter nauticus (strain ATCC 700491 / DSM 11845 / VT8) (Marinobacter aquaeolei).